Here is a 340-residue protein sequence, read N- to C-terminus: MAITVYYDKDCDLNLIKSKKVAIIGFGSQGHAHAMNLRDNGVNVTIGLREGSVSAVKAKNAGFEVVSVSEASKIADVIMILAPDEIQADIFNVEIKPNLSEGKAIAFAHGFNIHYGQIVVPKGVDVIMIAPKAPGHTVRNEFTLGGGTPCLIAIHQDESKNAKNLALSYASAIGGGRTGIIETTFKAETETDLFGEQAVLCGGLSALIQAGFETLVEAGYEPEMAYFECLHEMKLIVDLIYQGGIADMRYSISNTAEYGDYITGPKIITEETKKAMKGVLKDIQNGVFAKDFILERRAGFARMHAERKNMNDSLIEKTGRNLRAMMPWISAKKLVDKDKN.

The KARI N-terminal Rossmann domain occupies methionine 1–threonine 183. NADP(+)-binding positions include phenylalanine 26–glutamine 29, arginine 49, serine 52, serine 54, and aspartate 84–glutamine 87. Histidine 109 is a catalytic residue. Glycine 135 provides a ligand contact to NADP(+). Residues threonine 184 to isoleucine 329 form the KARI C-terminal knotted domain. 4 residues coordinate Mg(2+): aspartate 192, glutamate 196, glutamate 228, and glutamate 232. Residue serine 253 participates in substrate binding.

Belongs to the ketol-acid reductoisomerase family. It depends on Mg(2+) as a cofactor.

The catalysed reaction is (2R)-2,3-dihydroxy-3-methylbutanoate + NADP(+) = (2S)-2-acetolactate + NADPH + H(+). It catalyses the reaction (2R,3R)-2,3-dihydroxy-3-methylpentanoate + NADP(+) = (S)-2-ethyl-2-hydroxy-3-oxobutanoate + NADPH + H(+). Its pathway is amino-acid biosynthesis; L-isoleucine biosynthesis; L-isoleucine from 2-oxobutanoate: step 2/4. It participates in amino-acid biosynthesis; L-valine biosynthesis; L-valine from pyruvate: step 2/4. In terms of biological role, involved in the biosynthesis of branched-chain amino acids (BCAA). Catalyzes an alkyl-migration followed by a ketol-acid reduction of (S)-2-acetolactate (S2AL) to yield (R)-2,3-dihydroxy-isovalerate. In the isomerase reaction, S2AL is rearranged via a Mg-dependent methyl migration to produce 3-hydroxy-3-methyl-2-ketobutyrate (HMKB). In the reductase reaction, this 2-ketoacid undergoes a metal-dependent reduction by NADPH to yield (R)-2,3-dihydroxy-isovalerate. This Campylobacter jejuni subsp. jejuni serotype O:2 (strain ATCC 700819 / NCTC 11168) protein is Ketol-acid reductoisomerase (NADP(+)).